Consider the following 53-residue polypeptide: Ovomucoid (53 aa).

The Kazal-like domain maps to 3 to 53; the sequence is VDCSEYPKPGCMMERLPLCGSDNKTYNDKCNFCNAVVESNGTLTLNHFGEC. 3 disulfides stabilise this stretch: C5/C35, C13/C32, and C21/C53. N42 carries N-linked (GlcNAc...) asparagine glycosylation.

The protein resides in the secreted. The protein is Ovomucoid of Turnix sylvaticus (Common buttonquail).